The chain runs to 426 residues: MEELIIYTTNKGACAVDLHSGNNITHFKNDETAPNLSVFLTNTPSGNPLLFSAQTKGAMMHVYNWNRESVDQQIVLPEKLSCLAASTCGTWLAGGSASGRLFVWELASGKLVFSREVHYQAVTKLAFTDGLLFSTSKDARVLGWSLVTMASDPKDCQPCITWTEHNLGVVDLVVGGGPTRDTRVFTVSTDKTVRIWDVSSTALLTTITLPAAETPTTLAVDQLERTLFVGCASGNILSVSLYDVSPSTGLVSVGGASGVVESGNVALSHHKSAVTSLALSFDATLLVSADDKGFICVWDLPSRQVSRSIKQPRAEMNPVTYVQTITTHGLPTEKYNPKTAVKLPMLKRVQDDKPEDHDILVKIQPRQKTVAHEDTLQQMVESAQFGGDSLAGKVVQLENELSQAKSSFASLKESHDTLWNIYQRQQ.

4 WD repeats span residues Val-75–Ser-114, Val-117–Lys-154, Glu-164–Thr-206, and His-269–Ser-308.

The protein belongs to the WD repeat IPI3/WDR18 family. Component of the RIX1 complex, composed of IPI1, RIX1/IPI2 and IPI3 in a 1:2:2 stoichiometry. The complex interacts (via RIX1) with MDN1 (via its hexameric AAA ATPase ring) and the pre-60S ribosome particles.

The protein localises to the nucleus. In terms of biological role, component of the RIX1 complex required for processing of ITS2 sequences from 35S pre-rRNA. The sequence is that of Pre-rRNA-processing protein IPI3 (IPI3) from Yarrowia lipolytica (strain CLIB 122 / E 150) (Yeast).